We begin with the raw amino-acid sequence, 86 residues long: U13-theraphotoxin-Cg1b (86 aa).

Positions 1–21 are cleaved as a signal peptide; that stretch reads MKVSVLITLAVLGVMFVWASA. Residues 22 to 51 constitute a propeptide that is removed on maturation; sequence AELEQSGSDQKDSPAWLKSMERIFQSEERE. 3 disulfide bridges follow: Cys52/Cys66, Cys59/Cys71, and Cys65/Cys78.

Belongs to the neurotoxin 10 (Hwtx-1) family. 41 (Jztx-36) subfamily. In terms of tissue distribution, expressed by the venom gland.

The protein localises to the secreted. Its function is as follows. Probable ion channel inhibitor. This Chilobrachys guangxiensis (Chinese earth tiger tarantula) protein is U13-theraphotoxin-Cg1b.